Reading from the N-terminus, the 496-residue chain is Glycerol kinase (496 aa).

Thr-12 provides a ligand contact to ADP. Residues Thr-12, Thr-13, and Ser-14 each contribute to the ATP site. Thr-12 provides a ligand contact to sn-glycerol 3-phosphate. Arg-16 is a binding site for ADP. Sn-glycerol 3-phosphate-binding residues include Arg-82, Glu-83, Tyr-134, and Asp-244. Residues Arg-82, Glu-83, Tyr-134, Asp-244, and Gln-245 each coordinate glycerol. ADP is bound by residues Thr-266 and Gly-309. ATP-binding residues include Thr-266, Gly-309, Gln-313, and Gly-410. Positions 410 and 414 each coordinate ADP.

It belongs to the FGGY kinase family.

It catalyses the reaction glycerol + ATP = sn-glycerol 3-phosphate + ADP + H(+). The protein operates within polyol metabolism; glycerol degradation via glycerol kinase pathway; sn-glycerol 3-phosphate from glycerol: step 1/1. With respect to regulation, inhibited by fructose 1,6-bisphosphate (FBP). Key enzyme in the regulation of glycerol uptake and metabolism. Catalyzes the phosphorylation of glycerol to yield sn-glycerol 3-phosphate. The chain is Glycerol kinase from Treponema denticola (strain ATCC 35405 / DSM 14222 / CIP 103919 / JCM 8153 / KCTC 15104).